A 257-amino-acid chain; its full sequence is Exosome complex component mtr3 (257 aa).

It belongs to the RNase PH family. In terms of assembly, component of the RNA exosome complex. Specifically part of the catalytically inactive RNA exosome core complex (Exo-9) may associate with the catalytic subunits rrp6 and dis3 in cytoplasmic- and nuclear-specific RNA exosome complex forms. Exo-9 is formed by a hexameric base ring of RNase PH domain-containing subunits and a cap ring consisting of csl4, rrp4 and rrp40.

The protein localises to the cytoplasm. It localises to the nucleus. The protein resides in the nucleolus. Functionally, non-catalytic component of the RNA exosome complex which has 3'-&gt;5' exoribonuclease activity and participates in a multitude of cellular RNA processing and degradation events. In the nucleus, the RNA exosome complex is involved in proper maturation of stable RNA species such as rRNA, snRNA and snoRNA, in the elimination of RNA processing by-products and non-coding 'pervasive' transcripts, such as antisense RNA species and cryptic unstable transcripts (CUTs), and of mRNAs with processing defects, thereby limiting or excluding their export to the cytoplasm. In the cytoplasm, the RNA exosome complex is involved in general mRNA turnover and in RNA surveillance pathways, preventing translation of aberrant mRNAs. The catalytic inactive RNA exosome core complex of 9 subunits (Exo-9) is proposed to play a pivotal role in the binding and presentation of RNA for ribonucleolysis, and to serve as a scaffold for the association with catalytic subunits and accessory proteins or complexes. ski6 is part of the hexameric ring of RNase PH domain-containing subunits proposed to form a central channel which threads RNA substrates for degradation. The chain is Exosome complex component mtr3 (mtr3) from Schizosaccharomyces pombe (strain 972 / ATCC 24843) (Fission yeast).